A 336-amino-acid chain; its full sequence is Ketol-acid reductoisomerase (NADP(+)) (336 aa).

The KARI N-terminal Rossmann domain occupies 1–181; that stretch reads MNVYYDKDCN…GGGRTGIIET (181 aa). Residues 24-27, Arg-47, Ser-50, Ser-52, and 82-85 contribute to the NADP(+) site; these read YGSQ and DEFQ. His-107 is an active-site residue. Gly-133 lines the NADP(+) pocket. Positions 182 to 327 constitute a KARI C-terminal knotted domain; the sequence is TFQDETETDL…GKLRSMMPWI (146 aa). The Mg(2+) site is built by Asp-190, Glu-194, Glu-226, and Glu-230. A substrate-binding site is contributed by Ser-251.

It belongs to the ketol-acid reductoisomerase family. It depends on Mg(2+) as a cofactor.

The enzyme catalyses (2R)-2,3-dihydroxy-3-methylbutanoate + NADP(+) = (2S)-2-acetolactate + NADPH + H(+). The catalysed reaction is (2R,3R)-2,3-dihydroxy-3-methylpentanoate + NADP(+) = (S)-2-ethyl-2-hydroxy-3-oxobutanoate + NADPH + H(+). The protein operates within amino-acid biosynthesis; L-isoleucine biosynthesis; L-isoleucine from 2-oxobutanoate: step 2/4. It functions in the pathway amino-acid biosynthesis; L-valine biosynthesis; L-valine from pyruvate: step 2/4. Functionally, involved in the biosynthesis of branched-chain amino acids (BCAA). Catalyzes an alkyl-migration followed by a ketol-acid reduction of (S)-2-acetolactate (S2AL) to yield (R)-2,3-dihydroxy-isovalerate. In the isomerase reaction, S2AL is rearranged via a Mg-dependent methyl migration to produce 3-hydroxy-3-methyl-2-ketobutyrate (HMKB). In the reductase reaction, this 2-ketoacid undergoes a metal-dependent reduction by NADPH to yield (R)-2,3-dihydroxy-isovalerate. The sequence is that of Ketol-acid reductoisomerase (NADP(+)) from Geotalea daltonii (strain DSM 22248 / JCM 15807 / FRC-32) (Geobacter daltonii).